Reading from the N-terminus, the 505-residue chain is Adenylosuccinate synthetase, chloroplastic (505 aa).

The N-terminal 60 residues, 1-60 (MTTMNISTLRLDSNPITTSTKSTTHRSGALGYNGSYSCRLLQFQKKNKAPSIIVCSTKPL), are a transit peptide targeting the chloroplast. GTP is bound by residues 92 to 98 (GDEGKGK) and 120 to 122 (GHT). Asp-93 acts as the Proton acceptor in catalysis. Residues Asp-93 and Gly-120 each coordinate Mg(2+). Residues 93 to 96 (DEGK), 118 to 121 (NAGH), Thr-210, Arg-224, Gln-304, Thr-319, and Arg-383 each bind IMP. The active-site Proton donor is the His-121. A substrate-binding site is contributed by 379 to 385 (TTTGRPR). GTP-binding positions include Arg-385, 411-413 (KLD), and 494-496 (GVG).

Belongs to the adenylosuccinate synthetase family. Homodimer. Mg(2+) serves as cofactor.

It is found in the plastid. The protein localises to the chloroplast. The catalysed reaction is IMP + L-aspartate + GTP = N(6)-(1,2-dicarboxyethyl)-AMP + GDP + phosphate + 2 H(+). It participates in purine metabolism; AMP biosynthesis via de novo pathway; AMP from IMP: step 1/2. Plays an important role in the de novo pathway and in the salvage pathway of purine nucleotide biosynthesis. Catalyzes the first committed step in the biosynthesis of AMP from IMP. The polypeptide is Adenylosuccinate synthetase, chloroplastic (Nicotiana tabacum (Common tobacco)).